A 164-amino-acid polypeptide reads, in one-letter code: Pyruvoyl-dependent arginine decarboxylase (164 aa).

S52 is modified (pyruvic acid (Ser)).

Belongs to the PdaD family. It depends on pyruvate as a cofactor.

The catalysed reaction is L-arginine + H(+) = agmatine + CO2. The sequence is that of Pyruvoyl-dependent arginine decarboxylase from Methanococcus maripaludis (strain C7 / ATCC BAA-1331).